The following is a 369-amino-acid chain: Glutamate 5-kinase (369 aa).

Lys-8 contributes to the ATP binding site. Substrate-binding residues include Ser-49, Asp-136, and Asn-148. ATP contacts are provided by residues 168-169 (TD) and 211-217 (TGGMATK). One can recognise a PUA domain in the interval 276–354 (KGELWLDEGA…TELANILGYA (79 aa)).

It belongs to the glutamate 5-kinase family.

It localises to the cytoplasm. It carries out the reaction L-glutamate + ATP = L-glutamyl 5-phosphate + ADP. Its pathway is amino-acid biosynthesis; L-proline biosynthesis; L-glutamate 5-semialdehyde from L-glutamate: step 1/2. Its function is as follows. Catalyzes the transfer of a phosphate group to glutamate to form L-glutamate 5-phosphate. The polypeptide is Glutamate 5-kinase (Thermosynechococcus vestitus (strain NIES-2133 / IAM M-273 / BP-1)).